A 1068-amino-acid chain; its full sequence is MNSIKNVPARVLSRRPGHSLEAEREQFDKTQAISISKAINTQEAPVKEKHARRIILGTHHEKGAFTFWSYAIGLPLPSSSILSWKFCHVLHKVLRDGHPNVLHDCQRYRSNIREIGDLWGHLHDRYGQLVNVYTKLLLTKISFHLKHPQFPAGLEVTDEVLEKAAGTDVNNIFQLTVEMFDYMDCELKLSESVFRQLNTAIAVSQMSSGQCRLAPLIQVIQDCSHLYHYTVKLLFKLHSCLPADTLQGHRDRFHEQFHSLRNFFRRASDMLYFKRLIQIPRLPEGPPNFLRASALAEHIKPVVVIPEEAPEDEEPENLIEISTGPPAGEPVVVADLFDQTFGPPNGSVKDDRDLQIESLKREVEMLRSELEKIKLEAQRYIAQLKSQVNALEGELEEQRKQKQKALVDNEQLRHELAQLRAAQLEGERSQGLREEAERKASATEARYNKLKEKHSELVHVHAELLRKNADTAKQLTVTQQSQEEVARVKEQLAFQVEQVKRESELKLEEKSDQLEKLKRELEAKAGELARAQEALSHTEQSKSELSSRLDTLSAEKDALSGAVRQREADLLAAQSLVRETEAALSREQQRSSQEQGELQGRLAERESQEQGLRQRLLDEQFAVLRGAAAEAAGILQDAVSKLDDPLHLRCTSSPDYLVSRAQEALDAVSTLEEGHAQYLTSLADASALVAALTRFSHLAADTIINGGATSHLAPTDPADRLIDTCRECGARALELMGQLQDQQALRHMQASLVRTPLQGILQLGQELKPKSLDVRQEELGAVVDKEMAATSAAIEDAVRRIEDMMNQARHASSGVKLEVNERILNSCTDLMKAIRLLVTTSTSLQKEIVESGRGAATQQEFYAKNSRWTEGLISASKAVGWGATQLVEAADKVVLHTGKYEELIVCSHEIAASTAQLVAASKVKANKHSPHLSRLQECSRTVNERAANVVASTKSGQEQIEDRDTMDFSGLSLIKLKKQEMETQVRVLELEKTLEAERMRLGELRKQHYVLAGASGSPGEEVAIRPSTAPRSVTTKKPPLAQKPSVAPRQDHQLDKKDGIYPAQLVNY.

Met1 is subject to N-acetylmethionine. Positions 23 to 151 (EREQFDKTQA…SFHLKHPQFP (129 aa)) constitute an ENTH domain. Residues 347 to 599 (SVKDDRDLQI…RSSQEQGELQ (253 aa)) are a coiled coil. Disordered stretches follow at residues 424–443 (LEGERSQGLREEAERKASAT), 529–549 (ARAQEALSHTEQSKSELSSRL), and 582–608 (AALSREQQRSSQEQGELQGRLAERESQ). 2 stretches are compositionally biased toward basic and acidic residues: residues 425 to 443 (EGERSQGLREEAERKASAT) and 539 to 549 (EQSKSELSSRL). A compositionally biased stretch (low complexity) spans 590–600 (RSSQEQGELQG). The I/LWEQ domain maps to 771-1012 (SLDVRQEELG…ELRKQHYVLA (242 aa)). Residues 867 to 924 (RWTEGLISASKAVGWGATQLVEAADKVVLHTGKYEELIVCSHEIAASTAQLVAASKVK) are important for actin binding. The tract at residues 1016-1060 (GSPGEEVAIRPSTAPRSVTTKKPPLAQKPSVAPRQDHQLDKKDGI) is disordered. Ser1017 is subject to Phosphoserine. A compositionally biased stretch (basic and acidic residues) spans 1049 to 1059 (RQDHQLDKKDG).

The protein belongs to the SLA2 family. As to quaternary structure, homodimer. Interacts with actin; homodimerization promotes actin binding. Interacts with CLTB. Interacts with HIP1. Interacts (via ENTH and I/LWEQ domains) with BCL2L10. In terms of tissue distribution, brain, heart, kidney, pancreas, and liver, but not in lung or placenta.

Its subcellular location is the cytoplasm. The protein localises to the perinuclear region. The protein resides in the endomembrane system. It localises to the cytoplasmic vesicle. It is found in the clathrin-coated vesicle membrane. Functionally, component of clathrin-coated pits and vesicles, that may link the endocytic machinery to the actin cytoskeleton. Binds 3-phosphoinositides (via ENTH domain). May act through the ENTH domain to promote cell survival by stabilizing receptor tyrosine kinases following ligand-induced endocytosis. The sequence is that of Huntingtin-interacting protein 1-related protein (HIP1R) from Homo sapiens (Human).